Consider the following 510-residue polypeptide: 2,3-bisphosphoglycerate-independent phosphoglycerate mutase (510 aa).

2 residues coordinate Mn(2+): Asp-13 and Ser-63. The active-site Phosphoserine intermediate is the Ser-63. Substrate is bound by residues His-124, 154-155 (RD), Arg-186, Arg-192, 262-265 (RADR), and Lys-334. Positions 401, 405, 442, 443, and 461 each coordinate Mn(2+).

This sequence belongs to the BPG-independent phosphoglycerate mutase family. In terms of assembly, monomer. The cofactor is Mn(2+).

It carries out the reaction (2R)-2-phosphoglycerate = (2R)-3-phosphoglycerate. It functions in the pathway carbohydrate degradation; glycolysis; pyruvate from D-glyceraldehyde 3-phosphate: step 3/5. Catalyzes the interconversion of 2-phosphoglycerate and 3-phosphoglycerate. This Aliivibrio fischeri (strain ATCC 700601 / ES114) (Vibrio fischeri) protein is 2,3-bisphosphoglycerate-independent phosphoglycerate mutase.